The primary structure comprises 229 residues: DNA repair protein RecO (229 aa).

This sequence belongs to the RecO family.

Its function is as follows. Involved in DNA repair and RecF pathway recombination. This is DNA repair protein RecO from Pseudomonas fluorescens (strain ATCC BAA-477 / NRRL B-23932 / Pf-5).